A 292-amino-acid chain; its full sequence is Non-homologous end joining protein Ku (292 aa).

Residues 9–187 form the Ku domain; sequence ITFGLVNVPV…TVPPITEREL (179 aa). Residues 264–285 show a composition bias toward low complexity; it reads AASAFPAAEKAPAGKNAATASA. The segment at 264-292 is disordered; the sequence is AASAFPAAEKAPAGKNAATASAKKARKLA.

This sequence belongs to the prokaryotic Ku family. As to quaternary structure, homodimer. Interacts with LigD.

With LigD forms a non-homologous end joining (NHEJ) DNA repair enzyme, which repairs dsDNA breaks with reduced fidelity. Binds linear dsDNA with 5'- and 3'- overhangs but not closed circular dsDNA nor ssDNA. Recruits and stimulates the ligase activity of LigD. The polypeptide is Non-homologous end joining protein Ku (Leifsonia xyli subsp. xyli (strain CTCB07)).